The sequence spans 230 residues: Cytochrome b6-f complex iron-sulfur subunit, chloroplastic (230 aa).

The N-terminal 50 residues, 1–50 (MSSTTLSPTTPSQLCSGKSGISCPSIALLVKPTRTQMTGRGNKGMKITCQ), are a transit peptide targeting the chloroplast. The chain crosses the membrane as a helical span at residues 72–92 (LLGALSLPTAGMLVPYGSFLV). The 99-residue stretch at 115–213 (ATEWLKTHAP…VGVEDGKVVF (99 aa)) folds into the Rieske domain. [2Fe-2S] cluster contacts are provided by cysteine 157, histidine 159, cysteine 175, and histidine 178. Cysteine 162 and cysteine 177 form a disulfide bridge.

Belongs to the Rieske iron-sulfur protein family. In terms of assembly, the 4 large subunits of the cytochrome b6-f complex are cytochrome b6, subunit IV (17 kDa polypeptide, petD), cytochrome f and the Rieske protein, while the 4 small subunits are petG, petL, petM and petN. The complex functions as a dimer. Requires [2Fe-2S] cluster as cofactor.

It localises to the plastid. The protein localises to the chloroplast thylakoid membrane. It catalyses the reaction 2 oxidized [plastocyanin] + a plastoquinol + 2 H(+)(in) = 2 reduced [plastocyanin] + a plastoquinone + 4 H(+)(out). Functionally, component of the cytochrome b6-f complex, which mediates electron transfer between photosystem II (PSII) and photosystem I (PSI), cyclic electron flow around PSI, and state transitions. The protein is Cytochrome b6-f complex iron-sulfur subunit, chloroplastic (petC) of Pisum sativum (Garden pea).